The primary structure comprises 239 residues: uncharacterized protein (239 aa).

The next 6 membrane-spanning stretches (helical) occupy residues 30–50 (VALL…IELI), 76–96 (LYLG…IFII), 107–127 (LIPI…FGYI), 157–177 (FIIL…FQIL), 188–208 (MMLS…AIIT), and 214–234 (LIQL…ILVL).

It belongs to the TatC family.

The protein resides in the plastid. It localises to the chloroplast membrane. This is an uncharacterized protein from Cyanidium caldarium (Red alga).